The chain runs to 476 residues: Cytochrome c oxidase subunit 1 (476 aa).

A helical transmembrane segment spans residues 19-39; that stretch reads LYYLWFSFLFGSYGFLLSVIL. Ca(2+) is bound at residue glutamate 42. 8 helical membrane passes run 61–81, 105–125, 151–171, 194–214, 240–260, 278–298, 310–330, and 345–365; these read MIFT…GLFG, ISLL…AAEF, VIIF…LNFI, LIIT…GVLM, LFWF…FGVI, MILA…HHMY, FTST…NWIC, and LLSL…VILG. Histidine 66 is a Fe(II)-heme a binding site. Residue histidine 246 participates in Cu cation binding. The 1'-histidyl-3'-tyrosine (His-Tyr) cross-link spans 246–250; the sequence is HPEVY. Tyrosine 250 lines the O2 pocket. Positions 295 and 296 each coordinate Cu cation. Residues histidine 374 and aspartate 375 each coordinate Mg(2+). 2 consecutive transmembrane segments (helical) span residues 379–399 and 415–435; these read VIAH…FTTV and SIVI…FLPM. Histidine 382 serves as a coordination point for heme a3. Histidine 384 serves as a coordination point for Fe(II)-heme a. Proline 448 is a Ca(2+) binding site. The chain crosses the membrane as a helical span at residues 455-475; sequence NGWNMICSIGSTMTLFGLLIF.

The protein belongs to the heme-copper respiratory oxidase family. Component of the cytochrome c oxidase (complex IV, CIV), a multisubunit enzyme composed of a catalytic core of 3 subunits and several supernumerary subunits. The complex exists as a monomer or a dimer and forms supercomplexes (SCs) in the inner mitochondrial membrane with ubiquinol-cytochrome c oxidoreductase (cytochrome b-c1 complex, complex III, CIII). Requires heme as cofactor. Cu cation is required as a cofactor.

Its subcellular location is the mitochondrion inner membrane. The enzyme catalyses 4 Fe(II)-[cytochrome c] + O2 + 8 H(+)(in) = 4 Fe(III)-[cytochrome c] + 2 H2O + 4 H(+)(out). The protein operates within energy metabolism; oxidative phosphorylation. Its function is as follows. Component of the cytochrome c oxidase, the last enzyme in the mitochondrial electron transport chain which drives oxidative phosphorylation. The respiratory chain contains 3 multisubunit complexes succinate dehydrogenase (complex II, CII), ubiquinol-cytochrome c oxidoreductase (cytochrome b-c1 complex, complex III, CIII) and cytochrome c oxidase (complex IV, CIV), that cooperate to transfer electrons derived from NADH and succinate to molecular oxygen, creating an electrochemical gradient over the inner membrane that drives transmembrane transport and the ATP synthase. Cytochrome c oxidase is the component of the respiratory chain that catalyzes the reduction of oxygen to water. Electrons originating from reduced cytochrome c in the intermembrane space (IMS) are transferred via the dinuclear copper A center (CU(A)) of subunit 2 and heme A of subunit 1 to the active site in subunit 1, a binuclear center (BNC) formed by heme A3 and copper B (CU(B)). The BNC reduces molecular oxygen to 2 water molecules using 4 electrons from cytochrome c in the IMS and 4 protons from the mitochondrial matrix. This Plasmodium falciparum protein is Cytochrome c oxidase subunit 1 (MT-CO1).